Here is a 322-residue protein sequence, read N- to C-terminus: Atrochrysone carboxyl ACP thioesterase dmxR1 (322 aa).

Residues His105, His107, Asp109, and His110 each coordinate Zn(2+). Asp109 acts as the Proton donor/acceptor in catalysis.

The protein belongs to the metallo-beta-lactamase superfamily. Zn(2+) is required as a cofactor.

The catalysed reaction is atrochrysone carboxyl-[ACP] + H2O = atrochrysone carboxylate + holo-[ACP] + H(+). It participates in secondary metabolite biosynthesis. In terms of biological role, atrochrysone carboxyl ACP thioesterase; part of the gene cluster that mediates the biosynthesis of the dimeric xanthones cryptosporioptides. The pathway begins with the synthesis of atrochrysone thioester by the polyketide synthase dmx-nrPKS. The atrochrysone carboxyl ACP thioesterase dmxR1 then breaks the thioester bond and releases the atrochrysone carboxylic acid from dmx-nrPKS. Atrochrysone carboxylic acid is decarboxylated by the decarboxylase dmxR15, and oxidized by the anthrone oxygenase dmxR16 to yield emodin. Emodin is then reduced to emodin hydroquinone by the oxidoreductase dmxR7. A-ring reduction by the short chain dehydrogenase dmxR18, dehydration by the scytalone dehydratase-like protein dmxR17 and probable spontaneous re-oxidation, results in overall deoxygenation to chrysophanol. Baeyer-Villiger oxidation by the Baeyer-Villiger monooxygenase (BVMO) dmxR6 then yields monodictylactone in equilibrium with monodictyphenone. In the case of the cryptosporioptides biosynthesis, monodictylactone is reduced at C-12 to an alcohol (by the short chain dehydrogenases dmxR12 or dmxR8) and hydroxylated at C-5 by dmxR9, yielding the electron-rich aromatic which could eliminate H(2)O to form the ortho-quinonemethide, followed by tautomerisation to paraquinone and complete the formal reduction to produce the 10-methylgroup. Conjugate addition of C-4a-OH to the resulting paraquinone by the monooxygenase dmxR10 then gives cyclohexadienone, which is then reduced at C-5 by the short chain dehydrogenase dmxR3 to give the dihydroxanthone. The 6,7-epoxide in the cryptosporioptides could be introduced by the cytochrome P450 monooxygenase dmxL3. The highly reducing PKS dmxL2 manufactures butyrate, which is further carboxylated by dmxL1 to form ethylmalonate. It is not yet clear whether the carboxylation occurs while the butyrate is attached to the ACP of dmxL2, but this unusual fungal metabolite could then be esterified to O-5 by the O-acetyltransferase dmxR13. Finally, dimerization performed by dmxR5 gives the observed dimers cryptosporioptides A, B and C as the final products of the pathway. This is Atrochrysone carboxyl ACP thioesterase dmxR1 from Cryptosporiopsis sp. (strain 8999).